Consider the following 754-residue polypeptide: MKETIQTDWIKSEAFNLENCCNDNPLNILGPHFFKGKWVTRVWMPEADEVNITFKDKTYKTTTPNHKWMFEAILHEDPKNNYQINVLRGGVSHSQQDPWAFKDEWMGEVDRHLFAEGNHHHIWKKMGAHISEDINQKGVMFCIWAPNAKSISIIGDINSWDGRHHPMQKRLGGVWELFMPILKEGDVYKYEIRTQQGHIYEKADPYGFLHEVRPQNGSIISKLNNFNWEDSSWITSRDSSSQINKPISVYEMHLGSWMHDSTDNKYIEKNGNPRHPVPAADLKPGTRFLTYPELTEKLIPYVKERGFTHIELMPISEHPFDGSWGYQVTGWYAPTSRYGTPNEFKEFINKCHAEGIGVILDWVPGHFPKDKHGLAFFDGCHLYEHGDPRIGEHKEWGTLIFNYSRNEVRNFLVANLIYWFEEFHIDGIRVDAVASMLYRDYLRPEGEWIPNENGGNENLEAVKFLQQANHVLFQHFPGALSIAEESTTWPMVTEPTNVGGLGFNLKWNMGWMHDMLDYFEIDPWFRQFHQNSVTFSITYNYTENFMLALSHDEVVHGKSHLLHKMPGDDWKKFANTRALLTYMWTHPGKKTIFMGMEFGQRQEWNVWDDLQWELLEYEPHKGIRNLIDDLNKLYKNEPSLWKNDFDPYGFQWIDCDDTSNSVISFMRRENESNEWLVVIANFTPNFHESYKIGVPLEGYYKEIFNSDGSKYGGSNKGNMGGKDTLKYNIHNYENALEIALPPLSVSIFKHQLKK.

Catalysis depends on D431, which acts as the Nucleophile. E484 functions as the Proton donor in the catalytic mechanism.

It belongs to the glycosyl hydrolase 13 family. GlgB subfamily. As to quaternary structure, monomer.

It catalyses the reaction Transfers a segment of a (1-&gt;4)-alpha-D-glucan chain to a primary hydroxy group in a similar glucan chain.. Its pathway is glycan biosynthesis; glycogen biosynthesis. Catalyzes the formation of the alpha-1,6-glucosidic linkages in glycogen by scission of a 1,4-alpha-linked oligosaccharide from growing alpha-1,4-glucan chains and the subsequent attachment of the oligosaccharide to the alpha-1,6 position. This chain is 1,4-alpha-glucan branching enzyme GlgB, found in Prochlorococcus marinus (strain MIT 9515).